The sequence spans 498 residues: Protein flp (498 aa).

The next 4 helical transmembrane spans lie at 6–26 (LYFL…IYIT), 389–409 (FNIV…FSAY), 433–453 (LSLC…YLIL), and 471–491 (LALI…LLFL).

The protein resides in the cell membrane. Functionally, its precise function is unknown. Has no penicillin-binding activity and is not involved in methicillin resistance. The sequence is that of Protein flp (flp) from Staphylococcus aureus (strain COL).